A 666-amino-acid polypeptide reads, in one-letter code: Protein-arginine deiminase type-4 (666 aa).

Residues Asn153, Asp155, Asp165, Asp168, Asp176, and Asp179 each contribute to the Ca(2+) site. Arg212 and Arg218 each carry citrulline. Gln349 serves as a coordination point for Ca(2+). Asp350 is an active-site residue. The Ca(2+) site is built by Glu351, Glu353, Asp369, and Ser370. Citrulline occurs at positions 372, 374, and 383. Substrate is bound at residue Arg374. Ca(2+) is bound by residues Phe407, Leu410, and Glu411. Active-site residues include His471, Asp473, and Cys648.

This sequence belongs to the protein arginine deiminase family. The cofactor is Ca(2+). Post-translationally, autocitrullination at Arg-372 and Arg-374 inactivates the enzyme. As to expression, epidermis.

It localises to the cytoplasm. Its subcellular location is the nucleus. The protein localises to the cytoplasmic granule. The catalysed reaction is L-arginyl-[protein] + H2O = L-citrullyl-[protein] + NH4(+). Functionally, catalyzes the citrullination/deimination of arginine residues of proteins such as histones, thereby playing a key role in histone code and regulation of stem cell maintenance. Citrullinates histone H1 at 'Arg-54' (to form H1R54ci), histone H3 at 'Arg-2', 'Arg-8', 'Arg-17' and/or 'Arg-26' (to form H3R2ci, H3R8ci, H3R17ci, H3R26ci, respectively) and histone H4 at 'Arg-3' (to form H4R3ci). Acts as a key regulator of stem cell maintenance by mediating citrullination of histone H1: citrullination of 'Arg-54' of histone H1 (H1R54ci) results in H1 displacement from chromatin and global chromatin decondensation, thereby promoting pluripotency and stem cell maintenance. Promotes profound chromatin decondensation during the innate immune response to infection in neutrophils by mediating formation of H1R54ci. Required for the formation of neutrophil extracellular traps (NETs); NETs are mainly composed of DNA fibers and are released by neutrophils to bind pathogens during inflammation. Citrullination of histone H3 prevents their methylation by CARM1 and HRMT1L2/PRMT1 and represses transcription. Citrullinates EP300/P300 at 'Arg-2142', which favors its interaction with NCOA2/GRIP1. The polypeptide is Protein-arginine deiminase type-4 (Padi4) (Rattus norvegicus (Rat)).